Reading from the N-terminus, the 470-residue chain is Argininosuccinate lyase (470 aa).

It belongs to the lyase 1 family. Argininosuccinate lyase subfamily.

It localises to the cytoplasm. It carries out the reaction 2-(N(omega)-L-arginino)succinate = fumarate + L-arginine. It functions in the pathway amino-acid biosynthesis; L-arginine biosynthesis; L-arginine from L-ornithine and carbamoyl phosphate: step 3/3. This is Argininosuccinate lyase from Mycobacterium sp. (strain MCS).